Consider the following 601-residue polypeptide: Elongation factor 4 (601 aa).

A tr-type G domain is found at 6 to 188 (QCIRNFSIIA…AVVAKVPPPQ (183 aa)). Residues 18–23 (DHGKST) and 135–138 (NKID) contribute to the GTP site.

Belongs to the TRAFAC class translation factor GTPase superfamily. Classic translation factor GTPase family. LepA subfamily.

The protein resides in the cell membrane. The enzyme catalyses GTP + H2O = GDP + phosphate + H(+). Functionally, required for accurate and efficient protein synthesis under certain stress conditions. May act as a fidelity factor of the translation reaction, by catalyzing a one-codon backward translocation of tRNAs on improperly translocated ribosomes. Back-translocation proceeds from a post-translocation (POST) complex to a pre-translocation (PRE) complex, thus giving elongation factor G a second chance to translocate the tRNAs correctly. Binds to ribosomes in a GTP-dependent manner. The chain is Elongation factor 4 from Desulfitobacterium hafniense (strain DSM 10664 / DCB-2).